We begin with the raw amino-acid sequence, 105 residues long: Probable tetrachloroethene reductive dehalogenase membrane anchor protein (105 aa).

The next 3 membrane-spanning stretches (helical) occupy residues isoleucine 3–isoleucine 23, isoleucine 35–glycine 55, and alanine 66–tyrosine 86.

The protein belongs to the PceB family.

The protein localises to the cell membrane. In terms of biological role, may act as a membrane anchor for the tetrachloroethene reductive dehalogenase PceA. The protein is Probable tetrachloroethene reductive dehalogenase membrane anchor protein of Dehalobacter restrictus (strain DSM 9455 / PER-K23).